The chain runs to 310 residues: Aspartate carbamoyltransferase catalytic subunit 1 (310 aa).

Residues Arg55 and Thr56 each coordinate carbamoyl phosphate. Lys85 provides a ligand contact to L-aspartate. Residues Arg106, His134, and Gln137 each coordinate carbamoyl phosphate. L-aspartate is bound by residues Arg167 and Arg228. Residues Leu266 and Pro267 each coordinate carbamoyl phosphate.

It belongs to the aspartate/ornithine carbamoyltransferase superfamily. ATCase family. As to quaternary structure, heterododecamer (2C3:3R2) of six catalytic PyrB chains organized as two trimers (C3), and six regulatory PyrI chains organized as three dimers (R2).

The enzyme catalyses carbamoyl phosphate + L-aspartate = N-carbamoyl-L-aspartate + phosphate + H(+). Its pathway is pyrimidine metabolism; UMP biosynthesis via de novo pathway; (S)-dihydroorotate from bicarbonate: step 2/3. In terms of biological role, catalyzes the condensation of carbamoyl phosphate and aspartate to form carbamoyl aspartate and inorganic phosphate, the committed step in the de novo pyrimidine nucleotide biosynthesis pathway. This is Aspartate carbamoyltransferase catalytic subunit 1 from Shewanella halifaxensis (strain HAW-EB4).